The primary structure comprises 388 residues: 4-hydroxy-3-methylbut-2-en-1-yl diphosphate synthase (flavodoxin) (388 aa).

[4Fe-4S] cluster contacts are provided by C281, C284, C316, and E323.

The protein belongs to the IspG family. [4Fe-4S] cluster serves as cofactor.

It carries out the reaction (2E)-4-hydroxy-3-methylbut-2-enyl diphosphate + oxidized [flavodoxin] + H2O + 2 H(+) = 2-C-methyl-D-erythritol 2,4-cyclic diphosphate + reduced [flavodoxin]. It participates in isoprenoid biosynthesis; isopentenyl diphosphate biosynthesis via DXP pathway; isopentenyl diphosphate from 1-deoxy-D-xylulose 5-phosphate: step 5/6. Converts 2C-methyl-D-erythritol 2,4-cyclodiphosphate (ME-2,4cPP) into 1-hydroxy-2-methyl-2-(E)-butenyl 4-diphosphate. The chain is 4-hydroxy-3-methylbut-2-en-1-yl diphosphate synthase (flavodoxin) from Pseudarthrobacter chlorophenolicus (strain ATCC 700700 / DSM 12829 / CIP 107037 / JCM 12360 / KCTC 9906 / NCIMB 13794 / A6) (Arthrobacter chlorophenolicus).